Here is a 141-residue protein sequence, read N- to C-terminus: Nucleoside diphosphate kinase (141 aa).

Residues Lys11, Phe59, Arg87, Thr93, Arg104, and Asn114 each contribute to the ATP site. Residue His117 is the Pros-phosphohistidine intermediate of the active site.

The protein belongs to the NDK family. In terms of assembly, homotetramer. Mg(2+) is required as a cofactor.

It is found in the cytoplasm. It carries out the reaction a 2'-deoxyribonucleoside 5'-diphosphate + ATP = a 2'-deoxyribonucleoside 5'-triphosphate + ADP. The catalysed reaction is a ribonucleoside 5'-diphosphate + ATP = a ribonucleoside 5'-triphosphate + ADP. In terms of biological role, major role in the synthesis of nucleoside triphosphates other than ATP. The ATP gamma phosphate is transferred to the NDP beta phosphate via a ping-pong mechanism, using a phosphorylated active-site intermediate. The protein is Nucleoside diphosphate kinase of Cupriavidus pinatubonensis (strain JMP 134 / LMG 1197) (Cupriavidus necator (strain JMP 134)).